The following is a 366-amino-acid chain: Aminomethyltransferase (366 aa).

This sequence belongs to the GcvT family. In terms of assembly, the glycine cleavage system is composed of four proteins: P, T, L and H.

The enzyme catalyses N(6)-[(R)-S(8)-aminomethyldihydrolipoyl]-L-lysyl-[protein] + (6S)-5,6,7,8-tetrahydrofolate = N(6)-[(R)-dihydrolipoyl]-L-lysyl-[protein] + (6R)-5,10-methylene-5,6,7,8-tetrahydrofolate + NH4(+). Its function is as follows. The glycine cleavage system catalyzes the degradation of glycine. This Bordetella pertussis (strain Tohama I / ATCC BAA-589 / NCTC 13251) protein is Aminomethyltransferase.